A 117-amino-acid chain; its full sequence is MAAIPSSGSLIATHDYYRRRIGSTSSNSSCSSSEYTGEVIPHPPGLARQDSGHWWSSFFFGKQNQMGTPNGFESQQKTGTYTVTNGQVTCVAREIVMKRHLSESSDSGKEPGSPLPS.

Positions 22–46 are disordered; it reads GSTSSNSSCSSSEYTGEVIPHPPGL. A compositionally biased stretch (low complexity) spans 23-33; sequence STSSNSSCSSS.

The protein belongs to the PPDPF family. Expressed exclusively in the exocrine cells during pancreas development.

In terms of biological role, probable regulator of exocrine pancreas development. The chain is Pancreatic progenitor cell differentiation and proliferation factor A (ppdpfa) from Danio rerio (Zebrafish).